The following is a 195-amino-acid chain: 7-methyl-GTP pyrophosphatase (195 aa).

Residue Asp-70 is the Proton acceptor of the active site.

This sequence belongs to the Maf family. YceF subfamily. It depends on a divalent metal cation as a cofactor.

It is found in the cytoplasm. The catalysed reaction is N(7)-methyl-GTP + H2O = N(7)-methyl-GMP + diphosphate + H(+). In terms of biological role, nucleoside triphosphate pyrophosphatase that hydrolyzes 7-methyl-GTP (m(7)GTP). May have a dual role in cell division arrest and in preventing the incorporation of modified nucleotides into cellular nucleic acids. This is 7-methyl-GTP pyrophosphatase from Shewanella sp. (strain MR-4).